The primary structure comprises 459 residues: Serine carboxypeptidase-like 27 (459 aa).

Positions 1 to 20 (MDYSFLLIILLLTISTSCCA) are cleaved as a signal peptide. 3 cysteine pairs are disulfide-bonded: C91–C344, C252–C264, and C288–C312. N-linked (GlcNAc...) asparagine glycosylation occurs at N142. S184 is a catalytic residue. N-linked (GlcNAc...) asparagine glycans are attached at residues N289 and N333. Catalysis depends on residues D381 and H433.

This sequence belongs to the peptidase S10 family. As to expression, ubiquitous.

The protein resides in the secreted. Its function is as follows. Probable carboxypeptidase. The sequence is that of Serine carboxypeptidase-like 27 (SCPL27) from Arabidopsis thaliana (Mouse-ear cress).